The sequence spans 191 residues: Peptidyl-tRNA hydrolase (191 aa).

Residue Tyr-17 participates in tRNA binding. Residue His-22 is the Proton acceptor of the active site. Residues Tyr-68, Asn-70, and Asn-116 each coordinate tRNA.

The protein belongs to the PTH family. As to quaternary structure, monomer.

It is found in the cytoplasm. It carries out the reaction an N-acyl-L-alpha-aminoacyl-tRNA + H2O = an N-acyl-L-amino acid + a tRNA + H(+). Its function is as follows. Hydrolyzes ribosome-free peptidyl-tRNAs (with 1 or more amino acids incorporated), which drop off the ribosome during protein synthesis, or as a result of ribosome stalling. In terms of biological role, catalyzes the release of premature peptidyl moieties from peptidyl-tRNA molecules trapped in stalled 50S ribosomal subunits, and thus maintains levels of free tRNAs and 50S ribosomes. The chain is Peptidyl-tRNA hydrolase from Mycobacterium marinum (strain ATCC BAA-535 / M).